A 357-amino-acid chain; its full sequence is Peptide chain release factor 1 (357 aa).

Glutamine 234 is modified (N5-methylglutamine). Basic and acidic residues predominate over residues 284–307 (KKQEQRSNDRKQQVGSGDRSERIR). A disordered region spans residues 284 to 313 (KKQEQRSNDRKQQVGSGDRSERIRTYNFPQ).

The protein belongs to the prokaryotic/mitochondrial release factor family. Post-translationally, methylated by PrmC. Methylation increases the termination efficiency of RF1.

The protein resides in the cytoplasm. Peptide chain release factor 1 directs the termination of translation in response to the peptide chain termination codons UAG and UAA. The chain is Peptide chain release factor 1 from Borrelia hermsii (strain HS1 / DAH).